The following is a 331-amino-acid chain: UPF0194 membrane protein YbhG (331 aa).

A signal peptide spans 1–19; sequence MKKPVVIGLAIAAIVAVIA. Residues 107–208 are a coiled coil; that stretch reads EEIAQAAAAV…LDLQDTTLIA (102 aa).

It belongs to the UPF0194 family.

The protein localises to the periplasm. This is UPF0194 membrane protein YbhG from Salmonella heidelberg (strain SL476).